The following is a 449-amino-acid chain: Galactosyl transferase CpsE (449 aa).

5 helical membrane passes run V5–F22, D27–R46, M59–F78, S88–L107, and F258–P280.

The protein belongs to the bacterial sugar transferase family.

It localises to the cell membrane. Its function is as follows. Galactosyl transferase is essential for the assembly of the group B streptococci (GBS) type III capsular polysaccharide. May be involved in the formation of either or both galactosidic bonds by catalyzing the addition of galactose to an oligosaccharide precursor or to a lipid intermediate. Type III capsular polysaccharide consists of a linear backbone with short side chains ending in residues of N-acetylneuraminic acid or sialic acid. The presence of sialic acid on the surface of the organism inhibits activation of the alternative pathway of complement and is thought to be an important element in the virulence function of the capsule. The polypeptide is Galactosyl transferase CpsE (cpsE) (Streptococcus agalactiae serotype III (strain NEM316)).